The primary structure comprises 831 residues: Translation initiation factor IF-2 (831 aa).

Positions 329 to 499 constitute a tr-type G domain; the sequence is TRAPVVTVMG…LLISEMQDLK (171 aa). The interval 338–345 is G1; the sequence is GHVDHGKT. 338–345 contributes to the GTP binding site; the sequence is GHVDHGKT. A G2 region spans residues 363-367; that stretch reads GITQH. A G3 region spans residues 385–388; that stretch reads DTPG. GTP is bound by residues 385–389 and 439–442; these read DTPGH and NKID. The G4 stretch occupies residues 439 to 442; that stretch reads NKID. The G5 stretch occupies residues 475 to 477; the sequence is SAL.

The protein belongs to the TRAFAC class translation factor GTPase superfamily. Classic translation factor GTPase family. IF-2 subfamily.

The protein resides in the cytoplasm. Functionally, one of the essential components for the initiation of protein synthesis. Protects formylmethionyl-tRNA from spontaneous hydrolysis and promotes its binding to the 30S ribosomal subunits. Also involved in the hydrolysis of GTP during the formation of the 70S ribosomal complex. The protein is Translation initiation factor IF-2 of Rickettsia typhi (strain ATCC VR-144 / Wilmington).